A 236-amino-acid chain; its full sequence is Small ribosomal subunit protein uS2c (236 aa).

The protein belongs to the universal ribosomal protein uS2 family.

The protein resides in the plastid. The protein localises to the chloroplast. This is Small ribosomal subunit protein uS2c (rps2) from Chloranthus spicatus (Chulantree).